Consider the following 122-residue polypeptide: Putative iron-sulfur cluster insertion protein ErpA (122 aa).

Iron-sulfur cluster contacts are provided by Cys50, Cys114, and Cys116.

Belongs to the HesB/IscA family. As to quaternary structure, homodimer. Iron-sulfur cluster is required as a cofactor.

In terms of biological role, required for insertion of 4Fe-4S clusters. In Cupriavidus metallidurans (strain ATCC 43123 / DSM 2839 / NBRC 102507 / CH34) (Ralstonia metallidurans), this protein is Putative iron-sulfur cluster insertion protein ErpA.